Here is a 251-residue protein sequence, read N- to C-terminus: Prolactin-7C1 (251 aa).

The first 30 residues, 1-30 (MLLSLTHPSFLAMLPMLLMSNLLQWEGVTS), serve as a signal peptide directing secretion. Residue asparagine 57 is glycosylated (N-linked (GlcNAc...) asparagine). 2 disulfides stabilise this stretch: cysteine 101–cysteine 217 and cysteine 234–cysteine 242.

This sequence belongs to the somatotropin/prolactin family. Expressed exclusively in the placenta. Expressed in spongiotrophoblast cells and trophoblast giant cells of the junctional zone and in labyrinthine trophoblast.

It is found in the secreted. The chain is Prolactin-7C1 (Prl7c1) from Mus musculus (Mouse).